A 504-amino-acid chain; its full sequence is UDP-GalNAc:beta-1,3-N-acetylgalactosaminyltransferase 2 (504 aa).

The Cytoplasmic portion of the chain corresponds to 1-3; that stretch reads MRN. Residues 4–24 form a helical; Signal-anchor for type II membrane protein membrane-spanning segment; it reads WLVLLCPCVLGAALHLWHLWL. Topologically, residues 25–504 are lumenal; the sequence is RSPPDPHNTG…DPCQCEAKVR (480 aa). N117 and N176 each carry an N-linked (GlcNAc...) asparagine glycan.

It belongs to the glycosyltransferase 31 family. Post-translationally, N-glycosylated. In terms of tissue distribution, present in testis (at protein level). In testis, it is mainly detected in the middle layers of seminiferous tubules at stages XII to II. Strongly expressed in primary and secondary spermatocytes and early round spermatids, but not in spermatogonia, elongating or elongated spermatids, or in Leydig or Sertoli cells.

It localises to the golgi apparatus membrane. Its subcellular location is the endoplasmic reticulum. It catalyses the reaction 3-O-(N-acetyl-beta-D-glucosaminyl-(1-&gt;4)-alpha-D-mannosyl)-L-threonyl-[protein] + UDP-N-acetyl-alpha-D-galactosamine = 3-O-[beta-D-GalNAc-(1-&gt;3)-beta-D-GlcNAc-(1-&gt;4)-alpha-D-Man]-L-Thr-[protein] + UDP + H(+). It functions in the pathway protein modification; protein glycosylation. In terms of biological role, beta-1,3-N-acetylgalactosaminyltransferase that synthesizes a unique carbohydrate structure, GalNAc-beta-1-3GlcNAc, on N- and O-glycans. Has no galactose nor galactosaminyl transferase activity toward any acceptor substrate. Involved in alpha-dystroglycan (DAG1) glycosylation: acts coordinately with GTDC2/POMGnT2 to synthesize a GalNAc-beta3-GlcNAc-beta-terminus at the 4-position of protein O-mannose in the biosynthesis of the phosphorylated O-mannosyl trisaccharide (N-acetylgalactosamine-beta-3-N-acetylglucosamine-beta-4-(phosphate-6-)mannose), a carbohydrate structure present in alpha-dystroglycan, which is required for binding laminin G-like domain-containing extracellular proteins with high affinity. This Mus musculus (Mouse) protein is UDP-GalNAc:beta-1,3-N-acetylgalactosaminyltransferase 2 (B3galnt2).